We begin with the raw amino-acid sequence, 371 residues long: DNA replication and repair protein RecF (371 aa).

ATP is bound at residue 30-37; sequence GENAQGKT.

The protein belongs to the RecF family.

The protein localises to the cytoplasm. Functionally, the RecF protein is involved in DNA metabolism; it is required for DNA replication and normal SOS inducibility. RecF binds preferentially to single-stranded, linear DNA. It also seems to bind ATP. The protein is DNA replication and repair protein RecF of Staphylococcus epidermidis (strain ATCC 12228 / FDA PCI 1200).